Here is a 156-residue protein sequence, read N- to C-terminus: Small ribosomal subunit protein uS7 (156 aa).

The protein belongs to the universal ribosomal protein uS7 family. In terms of assembly, part of the 30S ribosomal subunit. Contacts proteins S9 and S11.

One of the primary rRNA binding proteins, it binds directly to 16S rRNA where it nucleates assembly of the head domain of the 30S subunit. Is located at the subunit interface close to the decoding center, probably blocks exit of the E-site tRNA. The protein is Small ribosomal subunit protein uS7 of Frankia casuarinae (strain DSM 45818 / CECT 9043 / HFP020203 / CcI3).